Here is a 339-residue protein sequence, read N- to C-terminus: Phenylalanine--tRNA ligase alpha subunit (339 aa).

Glu-250 provides a ligand contact to Mg(2+).

Belongs to the class-II aminoacyl-tRNA synthetase family. Phe-tRNA synthetase alpha subunit type 1 subfamily. As to quaternary structure, tetramer of two alpha and two beta subunits. It depends on Mg(2+) as a cofactor.

The protein localises to the cytoplasm. The enzyme catalyses tRNA(Phe) + L-phenylalanine + ATP = L-phenylalanyl-tRNA(Phe) + AMP + diphosphate + H(+). This is Phenylalanine--tRNA ligase alpha subunit from Christiangramia forsetii (strain DSM 17595 / CGMCC 1.15422 / KT0803) (Gramella forsetii).